The chain runs to 116 residues: Ribonuclease P protein component (116 aa).

This sequence belongs to the RnpA family. Consists of a catalytic RNA component (M1 or rnpB) and a protein subunit.

It carries out the reaction Endonucleolytic cleavage of RNA, removing 5'-extranucleotides from tRNA precursor.. In terms of biological role, RNaseP catalyzes the removal of the 5'-leader sequence from pre-tRNA to produce the mature 5'-terminus. It can also cleave other RNA substrates such as 4.5S RNA. The protein component plays an auxiliary but essential role in vivo by binding to the 5'-leader sequence and broadening the substrate specificity of the ribozyme. The chain is Ribonuclease P protein component from Gluconacetobacter diazotrophicus (strain ATCC 49037 / DSM 5601 / CCUG 37298 / CIP 103539 / LMG 7603 / PAl5).